A 76-amino-acid polypeptide reads, in one-letter code: cAMP-dependent protein kinase inhibitor alpha (76 aa).

Position 2 is a blocked amino end (Thr) (threonine 2). A disordered region spans residues 49-76 (KAEGEGDAQRNPSEQTGEAQGEAAKQES).

The protein belongs to the PKI family.

Its function is as follows. Extremely potent competitive inhibitor of cAMP-dependent protein kinase activity, this protein interacts with the catalytic subunit of the enzyme after the cAMP-induced dissociation of its regulatory chains. This chain is cAMP-dependent protein kinase inhibitor alpha (PKIA), found in Gallus gallus (Chicken).